A 433-amino-acid polypeptide reads, in one-letter code: Pyrimidine-nucleoside phosphorylase (433 aa).

A phosphate-binding site is contributed by 81-83 (KHS). Residues Gly88 and Thr90 each contribute to the K(+) site. Phosphate-binding positions include Thr92, 108–110 (KMS), and Thr120. Substrate contacts are provided by Arg168 and Lys187. 3 residues coordinate K(+): Leu243, Ala246, and Glu255.

It belongs to the thymidine/pyrimidine-nucleoside phosphorylase family. As to quaternary structure, homodimer. It depends on K(+) as a cofactor.

It carries out the reaction uridine + phosphate = alpha-D-ribose 1-phosphate + uracil. The enzyme catalyses thymidine + phosphate = 2-deoxy-alpha-D-ribose 1-phosphate + thymine. It catalyses the reaction 2'-deoxyuridine + phosphate = 2-deoxy-alpha-D-ribose 1-phosphate + uracil. In terms of biological role, catalyzes phosphorolysis of the pyrimidine nucleosides uridine, thymidine and 2'-deoxyuridine with the formation of the corresponding pyrimidine base and ribose-1-phosphate. The polypeptide is Pyrimidine-nucleoside phosphorylase (pdp) (Staphylococcus haemolyticus (strain JCSC1435)).